A 367-amino-acid chain; its full sequence is Chorismate synthase (367 aa).

Arg-48 is a binding site for NADP(+). FMN is bound by residues 125–127 (RSS), Gly-284, 299–303 (KPTPS), and Arg-325.

The protein belongs to the chorismate synthase family. In terms of assembly, homotetramer. FMNH2 serves as cofactor.

The catalysed reaction is 5-O-(1-carboxyvinyl)-3-phosphoshikimate = chorismate + phosphate. It participates in metabolic intermediate biosynthesis; chorismate biosynthesis; chorismate from D-erythrose 4-phosphate and phosphoenolpyruvate: step 7/7. Its function is as follows. Catalyzes the anti-1,4-elimination of the C-3 phosphate and the C-6 proR hydrogen from 5-enolpyruvylshikimate-3-phosphate (EPSP) to yield chorismate, which is the branch point compound that serves as the starting substrate for the three terminal pathways of aromatic amino acid biosynthesis. This reaction introduces a second double bond into the aromatic ring system. The protein is Chorismate synthase of Lachnoclostridium phytofermentans (strain ATCC 700394 / DSM 18823 / ISDg) (Clostridium phytofermentans).